Consider the following 114-residue polypeptide: DNA-binding protein Mbur_0117 (114 aa).

The segment at 14–37 is disordered; sequence ELQQQQSSPQNDAQAAYQQEQAQA. The segment covering 16 to 35 has biased composition (low complexity); that stretch reads QQQQSSPQNDAQAAYQQEQA.

It belongs to the PDCD5 family.

This chain is DNA-binding protein Mbur_0117, found in Methanococcoides burtonii (strain DSM 6242 / NBRC 107633 / OCM 468 / ACE-M).